The sequence spans 129 residues: Small ribosomal subunit protein uS11 (129 aa).

It belongs to the universal ribosomal protein uS11 family. Part of the 30S ribosomal subunit. Interacts with proteins S7 and S18. Binds to IF-3.

Located on the platform of the 30S subunit, it bridges several disparate RNA helices of the 16S rRNA. Forms part of the Shine-Dalgarno cleft in the 70S ribosome. The sequence is that of Small ribosomal subunit protein uS11 from Pseudomonas fluorescens (strain ATCC BAA-477 / NRRL B-23932 / Pf-5).